An 876-amino-acid polypeptide reads, in one-letter code: Serrate RNA effector molecule homolog (876 aa).

The interval 1–90 is disordered; sequence MGDSDDEYDR…RRDWDEHSSD (90 aa). N-acetylglycine is present on G2. S4 is subject to Phosphoserine. Y8 is modified (phosphotyrosine). The span at 8–73 shows a compositional bias: basic and acidic residues; sequence YDRRRRDKFR…ERFSPPRHEL (66 aa). Phosphoserine is present on residues S67, S74, and S136. A Glycyl lysine isopeptide (Lys-Gly) (interchain with G-Cter in SUMO2) cross-link involves residue K150. The tract at residues 272-413 is disordered; it reads EEEEQAGKPG…PKDAPGLECK (142 aa). A compositionally biased stretch (basic and acidic residues) spans 297–347; it reads DGERKANEKDDKKEDGKQAENESSSDDKIKKSEGDGDKEEKKEDSEKEAKK. Over residues 370–387 the composition is skewed to acidic residues; that stretch reads SESESESGQAEEEKEEAD. Residues 388 to 413 show a composition bias toward basic and acidic residues; sequence ETLKEKEKPKEEEREKPKDAPGLECK. Phosphoserine is present on S493. A Phosphothreonine modification is found at T544. S570 carries the phosphoserine modification. Residues 575-597 are disordered; it reads ELLGSSGGAPPEEPPKEGNPAEI. T671 carries the phosphothreonine modification. S679 is subject to Phosphoserine. 3 positions are modified to omega-N-methylarginine: R833, R840, and R850. A disordered region spans residues 835–854; the sequence is NYDAFRGQGGYPGKPRNRMV.

This sequence belongs to the ARS2 family. As to quaternary structure, interacts with CASP8AP2, ERBB4, NCBP1/CBP80 and DROSHA. Interacts with LUZP4. Interacts with NCBP2/CBP20 and NCBP3. Interacts with MTREX.

It localises to the nucleus. It is found in the nucleoplasm. The protein resides in the cytoplasm. Functionally, acts as a mediator between the cap-binding complex (CBC) and the primary microRNAs (miRNAs) processing machinery during cell proliferation. Contributes to the stability and delivery of capped primary miRNA transcripts to the primary miRNA processing complex containing DGCR8 and DROSHA, thereby playing a role in RNA-mediated gene silencing (RNAi) by miRNAs. Binds capped RNAs (m7GpppG-capped RNA); however interaction is probably mediated via its interaction with NCBP1/CBP80 component of the CBC complex. Involved in cell cycle progression at S phase. Does not directly confer arsenite resistance but rather modulates arsenic sensitivity. Independently of its activity on miRNAs, necessary and sufficient to promote neural stem cell self-renewal. Does so by directly binding SOX2 promoter and positively regulating its transcription. The chain is Serrate RNA effector molecule homolog (SRRT) from Bos taurus (Bovine).